The chain runs to 185 residues: Shikimate kinase (185 aa).

Position 21–26 (21–26 (GVGKTT)) interacts with ATP. Thr25 contributes to the Mg(2+) binding site. Substrate-binding residues include Asp43, Arg67, and Gly90. Residue Arg129 coordinates ATP. Arg147 contacts substrate.

The protein belongs to the shikimate kinase family. Monomer. Mg(2+) is required as a cofactor.

The protein localises to the cytoplasm. It catalyses the reaction shikimate + ATP = 3-phosphoshikimate + ADP + H(+). The protein operates within metabolic intermediate biosynthesis; chorismate biosynthesis; chorismate from D-erythrose 4-phosphate and phosphoenolpyruvate: step 5/7. Catalyzes the specific phosphorylation of the 3-hydroxyl group of shikimic acid using ATP as a cosubstrate. The protein is Shikimate kinase of Bacillus pumilus (strain SAFR-032).